The chain runs to 314 residues: Homoserine O-acetyltransferase (314 aa).

Cysteine 142 acts as the Acyl-thioester intermediate in catalysis. 2 residues coordinate substrate: lysine 163 and serine 192. Catalysis depends on histidine 235, which acts as the Proton acceptor. Residue glutamate 237 is part of the active site. Position 249 (arginine 249) interacts with substrate.

The protein belongs to the MetA family.

It localises to the cytoplasm. The catalysed reaction is L-homoserine + acetyl-CoA = O-acetyl-L-homoserine + CoA. The protein operates within amino-acid biosynthesis; L-methionine biosynthesis via de novo pathway; O-acetyl-L-homoserine from L-homoserine: step 1/1. Its function is as follows. Transfers an acetyl group from acetyl-CoA to L-homoserine, forming acetyl-L-homoserine. This is Homoserine O-acetyltransferase from Streptococcus thermophilus (strain ATCC BAA-491 / LMD-9).